Here is a 352-residue protein sequence, read N- to C-terminus: Phosphate acyltransferase (352 aa).

It belongs to the PlsX family. Homodimer. Probably interacts with PlsY.

The protein localises to the cytoplasm. It catalyses the reaction a fatty acyl-[ACP] + phosphate = an acyl phosphate + holo-[ACP]. It functions in the pathway lipid metabolism; phospholipid metabolism. Functionally, catalyzes the reversible formation of acyl-phosphate (acyl-PO(4)) from acyl-[acyl-carrier-protein] (acyl-ACP). This enzyme utilizes acyl-ACP as fatty acyl donor, but not acyl-CoA. This Bordetella bronchiseptica (strain ATCC BAA-588 / NCTC 13252 / RB50) (Alcaligenes bronchisepticus) protein is Phosphate acyltransferase.